The primary structure comprises 88 residues: Large ribosomal subunit protein bL27 (88 aa).

Residues 1–21 form a disordered region; it reads MAHKKGQGSTQNNRDSAGRRL.

Belongs to the bacterial ribosomal protein bL27 family.

The protein is Large ribosomal subunit protein bL27 of Helicobacter acinonychis (strain Sheeba).